Here is a 233-residue protein sequence, read N- to C-terminus: 7-cyano-7-deazaguanine synthase (233 aa).

7-17 (CSGGLDSVSLA) lines the ATP pocket. 4 residues coordinate Zn(2+): Cys-185, Cys-193, Cys-196, and Cys-199.

This sequence belongs to the QueC family. The cofactor is Zn(2+).

The catalysed reaction is 7-carboxy-7-deazaguanine + NH4(+) + ATP = 7-cyano-7-deazaguanine + ADP + phosphate + H2O + H(+). The protein operates within purine metabolism; 7-cyano-7-deazaguanine biosynthesis. In terms of biological role, catalyzes the ATP-dependent conversion of 7-carboxy-7-deazaguanine (CDG) to 7-cyano-7-deazaguanine (preQ(0)). This is 7-cyano-7-deazaguanine synthase from Ruegeria sp. (strain TM1040) (Silicibacter sp.).